A 657-amino-acid polypeptide reads, in one-letter code: N-acetylgalactosaminyltransferase 7 (657 aa).

Residues 1 to 6 (MRLKIG) are Cytoplasmic-facing. Residues 7–29 (FILRSLLVVGSFLGLVVLWSSLT) form a helical; Signal-anchor for type II membrane protein membrane-spanning segment. Residues 30 to 657 (PRPDDPSPLS…KWEMNNIHSV (628 aa)) lie on the Lumenal side of the membrane. Residues 31–66 (RPDDPSPLSRMREDRDVNDPMPNRGGNGLAPGEDRF) form a disordered region. 5 disulfide bridges follow: C197–C435, C426–C507, C545–C562, C585–C600, and C625–C640. Positions 206–317 (LLTSSVVIVF…VNWYAPLVAP (112 aa)) are catalytic subdomain A. Substrate-binding residues include D247 and R277. Mn(2+) is bound by residues D301 and H303. The segment at 381 to 443 (PYRSPAMAGG…PCSRVGHIYR (63 aa)) is catalytic subdomain B. A substrate-binding site is contributed by W412. Residue H440 coordinates Mn(2+). R443 provides a ligand contact to substrate. Positions 532–652 (VDWGEIRGFE…SKTTQKWEMN (121 aa)) constitute a Ricin B-type lectin domain.

Belongs to the glycosyltransferase 2 family. GalNAc-T subfamily. It depends on Mn(2+) as a cofactor.

It is found in the golgi apparatus membrane. It carries out the reaction L-seryl-[protein] + UDP-N-acetyl-alpha-D-galactosamine = a 3-O-[N-acetyl-alpha-D-galactosaminyl]-L-seryl-[protein] + UDP + H(+). The enzyme catalyses L-threonyl-[protein] + UDP-N-acetyl-alpha-D-galactosamine = a 3-O-[N-acetyl-alpha-D-galactosaminyl]-L-threonyl-[protein] + UDP + H(+). Its pathway is protein modification; protein glycosylation. In terms of biological role, glycopeptide transferase involved in O-linked oligosaccharide biosynthesis, which catalyzes the transfer of an N-acetyl-D-galactosamine residue to an already glycosylated peptide. In contrast to other proteins of the family, it does not act as a peptide transferase that transfers GalNAc onto serine or threonine residue on the protein receptor, but instead requires the prior addition of a GalNAc on a peptide before adding additional GalNAc moieties. Some peptide transferase activity is however not excluded, considering that its appropriate peptide substrate may remain unidentified. The chain is N-acetylgalactosaminyltransferase 7 (GALNT7) from Pongo abelii (Sumatran orangutan).